The following is a 216-amino-acid chain: ATP-dependent Clp protease proteolytic subunit (216 aa).

The Nucleophile role is filled by S101. The active site involves H126.

This sequence belongs to the peptidase S14 family. In terms of assembly, component of the chloroplastic Clp protease core complex.

The protein localises to the plastid. It localises to the chloroplast stroma. It catalyses the reaction Hydrolysis of proteins to small peptides in the presence of ATP and magnesium. alpha-casein is the usual test substrate. In the absence of ATP, only oligopeptides shorter than five residues are hydrolyzed (such as succinyl-Leu-Tyr-|-NHMec, and Leu-Tyr-Leu-|-Tyr-Trp, in which cleavage of the -Tyr-|-Leu- and -Tyr-|-Trp bonds also occurs).. Cleaves peptides in various proteins in a process that requires ATP hydrolysis. Has a chymotrypsin-like activity. Plays a major role in the degradation of misfolded proteins. This is ATP-dependent Clp protease proteolytic subunit from Saccharum hybrid (Sugarcane).